We begin with the raw amino-acid sequence, 372 residues long: Envelope phospholipase OPG057 (372 aa).

The YPPL signature appears at 153–156 (YPPL). S-palmitoyl cysteine; by host attachment occurs at residues cysteine 185 and cysteine 186. The PLD phosphodiesterase domain occupies 307–334 (FTIQNNTKLLIVDDEYVHITSANFDGTH).

The protein belongs to the orthopoxvirus OPG057 family. As to quaternary structure, interacts with protein OPG190/B5. In terms of processing, palmitoylated. Attachment of the palmitate moiety is essential for correct intracellular targeting and protein function.

The protein resides in the virion membrane. It is found in the host Golgi apparatus. The protein localises to the host trans-Golgi network. It localises to the host endoplasmic reticulum membrane. The enzyme catalyses a 1,2-diacyl-sn-glycero-3-phosphocholine + H2O = a 1,2-diacyl-sn-glycero-3-phosphate + choline + H(+). Its function is as follows. Major envelope protein that plays a role in the biogenesis of the viral double membrane and in egress of virus from the host cell. Produces the wrapped form of virus that is required for cell-to-cell spread. Acts as a lipase with broad specificity including phospholipase C, phospholipase A, and triacylglycerol lipase activities. The protein is Envelope phospholipase OPG057 (OPG057) of Vaccinia virus (strain Western Reserve) (VACV).